A 311-amino-acid polypeptide reads, in one-letter code: Cytochrome c biogenesis protein CcsA (311 aa).

8 helical membrane passes run 11-31 (VLLL…LAFW), 44-64 (VVQL…LWRW), 68-88 (GHFP…GCTF), 101-121 (LVPA…SFAL), 146-166 (VIMM…AVLF), 217-237 (TITV…VWAN), 251-268 (TWAL…HTRL), and 280-300 (VAVS…LLGI).

Belongs to the CcmF/CycK/Ccl1/NrfE/CcsA family. As to quaternary structure, may interact with ccs1.

It is found in the cellular thylakoid membrane. In terms of biological role, required during biogenesis of c-type cytochromes (cytochrome c6 and cytochrome f) at the step of heme attachment. This chain is Cytochrome c biogenesis protein CcsA, found in Synechococcus sp. (strain RCC307).